The sequence spans 273 residues: Pyrroline-5-carboxylate reductase (273 aa).

This sequence belongs to the pyrroline-5-carboxylate reductase family.

Its subcellular location is the cytoplasm. The catalysed reaction is L-proline + NADP(+) = (S)-1-pyrroline-5-carboxylate + NADPH + 2 H(+). It carries out the reaction L-proline + NAD(+) = (S)-1-pyrroline-5-carboxylate + NADH + 2 H(+). It participates in amino-acid biosynthesis; L-proline biosynthesis; L-proline from L-glutamate 5-semialdehyde: step 1/1. In terms of biological role, catalyzes the reduction of 1-pyrroline-5-carboxylate (PCA) to L-proline. The chain is Pyrroline-5-carboxylate reductase from Pseudomonas aeruginosa (strain ATCC 15692 / DSM 22644 / CIP 104116 / JCM 14847 / LMG 12228 / 1C / PRS 101 / PAO1).